The primary structure comprises 227 residues: Cytochrome c oxidase subunit 2 (227 aa).

Residues 1–14 (MAYPFQLGLQDATS) are Mitochondrial intermembrane-facing. The chain crosses the membrane as a helical span at residues 15–45 (PIMEELLHFHDHTLMIVFLISSLILYIISLM). Residues 46-59 (LTTKLTHTSTMDAQ) lie on the Mitochondrial matrix side of the membrane. A helical transmembrane segment spans residues 60–87 (EVETVWTILPAIILILIALPSLRILYMM). Topologically, residues 88–227 (DEINNPSLTV…YFETWSALMV (140 aa)) are mitochondrial intermembrane. Cu cation-binding residues include histidine 161, cysteine 196, glutamate 198, cysteine 200, histidine 204, and methionine 207. A Mg(2+)-binding site is contributed by glutamate 198. At tyrosine 218 the chain carries Phosphotyrosine.

This sequence belongs to the cytochrome c oxidase subunit 2 family. As to quaternary structure, component of the cytochrome c oxidase (complex IV, CIV), a multisubunit enzyme composed of 14 subunits. The complex is composed of a catalytic core of 3 subunits MT-CO1, MT-CO2 and MT-CO3, encoded in the mitochondrial DNA, and 11 supernumerary subunits COX4I, COX5A, COX5B, COX6A, COX6B, COX6C, COX7A, COX7B, COX7C, COX8 and NDUFA4, which are encoded in the nuclear genome. The complex exists as a monomer or a dimer and forms supercomplexes (SCs) in the inner mitochondrial membrane with NADH-ubiquinone oxidoreductase (complex I, CI) and ubiquinol-cytochrome c oxidoreductase (cytochrome b-c1 complex, complex III, CIII), resulting in different assemblies (supercomplex SCI(1)III(2)IV(1) and megacomplex MCI(2)III(2)IV(2)). Found in a complex with TMEM177, COA6, COX18, COX20, SCO1 and SCO2. Interacts with TMEM177 in a COX20-dependent manner. Interacts with COX20. Interacts with COX16. Cu cation is required as a cofactor.

The protein resides in the mitochondrion inner membrane. The catalysed reaction is 4 Fe(II)-[cytochrome c] + O2 + 8 H(+)(in) = 4 Fe(III)-[cytochrome c] + 2 H2O + 4 H(+)(out). In terms of biological role, component of the cytochrome c oxidase, the last enzyme in the mitochondrial electron transport chain which drives oxidative phosphorylation. The respiratory chain contains 3 multisubunit complexes succinate dehydrogenase (complex II, CII), ubiquinol-cytochrome c oxidoreductase (cytochrome b-c1 complex, complex III, CIII) and cytochrome c oxidase (complex IV, CIV), that cooperate to transfer electrons derived from NADH and succinate to molecular oxygen, creating an electrochemical gradient over the inner membrane that drives transmembrane transport and the ATP synthase. Cytochrome c oxidase is the component of the respiratory chain that catalyzes the reduction of oxygen to water. Electrons originating from reduced cytochrome c in the intermembrane space (IMS) are transferred via the dinuclear copper A center (CU(A)) of subunit 2 and heme A of subunit 1 to the active site in subunit 1, a binuclear center (BNC) formed by heme A3 and copper B (CU(B)). The BNC reduces molecular oxygen to 2 water molecules using 4 electrons from cytochrome c in the IMS and 4 protons from the mitochondrial matrix. This chain is Cytochrome c oxidase subunit 2 (MT-CO2), found in Canis simensis (Ethiopian wolf).